We begin with the raw amino-acid sequence, 88 residues long: MIEKSIKAEIVKANARAANDTGSPEVQVALLTGRINELTPHFKANAKDHHGRRGLLRMVSRRRKLLDYLKSKDADRYTALIAKLGLRK.

This sequence belongs to the universal ribosomal protein uS15 family. Part of the 30S ribosomal subunit. Forms a bridge to the 50S subunit in the 70S ribosome, contacting the 23S rRNA.

Its function is as follows. One of the primary rRNA binding proteins, it binds directly to 16S rRNA where it helps nucleate assembly of the platform of the 30S subunit by binding and bridging several RNA helices of the 16S rRNA. Forms an intersubunit bridge (bridge B4) with the 23S rRNA of the 50S subunit in the ribosome. This is Small ribosomal subunit protein uS15 from Polaromonas sp. (strain JS666 / ATCC BAA-500).